We begin with the raw amino-acid sequence, 1159 residues long: Calcium-activated potassium channel subunit alpha-1 (1159 aa).

At 1–24 (EPNMDALIIPVTMEVPCDSRGQRM) the chain is on the extracellular side. The chain crosses the membrane as a helical span at residues 25–45 (WWAFLASSMVTFFGGLFIILL). Residues 46-116 (WRTLKYLWTV…MISAQTLTGR (71 aa)) lie on the Cytoplasmic side of the membrane. Residues Cys56, Cys57, and Cys59 are each lipidated (S-palmitoyl cysteine). The chain crosses the membrane as a helical span at residues 117-137 (VLVVLVFALSIGALVIYFIDS). At 138-152 (SNPIESCQNFYKDFT) the chain is on the extracellular side. The chain crosses the membrane as a helical span at residues 153–173 (LQIDMAFNVFFLLYFGLRFIA). The Cytoplasmic segment spans residues 174 to 177 (ANDN). Residues 178–198 (LWFWLEVNSVVDFFTVPPVFV) form a helical membrane-spanning segment. The Extracellular segment spans residues 199–202 (SVYL). A helical; Voltage-sensor transmembrane segment spans residues 203-223 (NRSWLGLRFLRALRLIQFSEI). Over 224-238 (LQFLNILKTSNSIKL) the chain is Cytoplasmic. A helical transmembrane segment spans residues 239–259 (VNLLSIFISTWLTAAGFIHLV). Over 260-273 (ENSGDPWENFQNSQ) the chain is Extracellular. The segment at residues 274–296 (ALTYWECVYLLMVTMSTVGYGDV) is an intramembrane region (pore-forming). The short motif at 290 to 293 (TVGY) is the Selectivity for potassium element. The Extracellular segment spans residues 297–305 (YAKTTPGGL). Residues 306-326 (FIVFFILGGLAMFASYVPEII) form a helical membrane-spanning segment. The Cytoplasmic segment spans residues 327-1159 (EIIGNRKKYG…PPIREVEDEC (833 aa)). The region spanning 345–487 (RKHIVVCGHI…WNWKEGDDAI (143 aa)) is the RCK N-terminal 1 domain. Mg(2+) contacts are provided by Glu377, Gln400, and Glu402. The interval 494 to 514 (LGFIAQSCLAQGLSTMLANLF) is segment S7. The interval 551–571 (LSFPTVCELCFVKLKLLMIAI) is segment S8. Residues 615–619 (CKACH) are heme-binding motif. Positions 639 to 668 (EQPSTLSPKKKQRNGGMRNSPSSSPKLMRH) are disordered. Phosphothreonine is present on Thr643. A phosphoserine mark is found at Ser645, Ser658, and Ser662. Positions 717-737 (VLSGHVVVCIFGHVSSALIGL) are segment S9. Residues 719-863 (SGHVVVCIFG…MDKSSPDNSP (145 aa)) form the RCK N-terminal 2 domain. Phosphothreonine is present on Thr850. Ser858 and Ser862 each carry phosphoserine. The short motif at 883-905 (TELVNDTNVQFLDQDDDDDPDTE) is the Calcium bowl element. Positions 892, 895, 898, and 900 each coordinate Ca(2+). Residues 912-932 (FACGTAFAVSVLDSLMSATYF) are segment S10. The span at 1066–1091 (RASLSHSSHSSQSSSKKSSSVHSIPS) shows a compositional bias: low complexity. A disordered region spans residues 1066–1124 (RASLSHSSHSSQSSSKKSSSVHSIPSTANRQNRPKSRESRDKQTEKKWFTDEPDNAYPR). Basic and acidic residues predominate over residues 1100-1115 (KSRESRDKQTEKKWFT). 2 positions are modified to phosphoserine: Ser1101 and Ser1104.

The protein belongs to the potassium channel family. Calcium-activated (TC 1.A.1.3) subfamily. KCa1.1/KCNMA1 sub-subfamily. Homotetramer; which constitutes the calcium-activated potassium channel. Interacts with beta subunits KCNMB1, KCNMB2, KCNMB3 and KCNMB4. Interacts with gamma subunits LRRC26, LRRC38, LRRC52 and LRRC55. Beta and gamma subunits are accessory, and modulate its activity. Interacts with RAB11B. Post-translationally, phosphorylated. Phosphorylation by kinases such as PKA and/or PKG. In smooth muscles, phosphorylation affects its activity. In terms of processing, palmitoylation by ZDHHC22 and ZDHHC23 within the intracellular linker between the S0 and S1 transmembrane domains regulates localization to the plasma membrane. Depalmitoylated by LYPLA1 and LYPLAL1, leading to retard exit from the trans-Golgi network. In terms of tissue distribution, expressed in all vascular and smooth muscles.

The protein localises to the cell membrane. The enzyme catalyses K(+)(in) = K(+)(out). With respect to regulation, ethanol and carbon monoxide-bound heme increase channel activation. Heme inhibits channel activation. Potassium channel activated by both membrane depolarization or increase in cytosolic Ca(2+) that mediates export of K(+). It is also activated by the concentration of cytosolic Mg(2+). Its activation dampens the excitatory events that elevate the cytosolic Ca(2+) concentration and/or depolarize the cell membrane. It therefore contributes to repolarization of the membrane potential. Plays a key role in controlling excitability in a number of systems, such as regulation of the contraction of smooth muscle, the tuning of hair cells in the cochlea, regulation of transmitter release, and innate immunity. In smooth muscles, its activation by high level of Ca(2+), caused by ryanodine receptors in the sarcoplasmic reticulum, regulates the membrane potential. In cochlea cells, its number and kinetic properties partly determine the characteristic frequency of each hair cell and thereby helps to establish a tonotopic map. Kinetics of KCNMA1 channels are determined by alternative splicing, phosphorylation status and its combination with modulating beta subunits. Highly sensitive to both iberiotoxin (IbTx) and charybdotoxin (CTX). The polypeptide is Calcium-activated potassium channel subunit alpha-1 (KCNMA1) (Canis lupus familiaris (Dog)).